Here is a 418-residue protein sequence, read N- to C-terminus: Glucose-1-phosphate adenylyltransferase (418 aa).

Alpha-D-glucose 1-phosphate is bound by residues Tyr104, Gly169, 184–185 (EK), and Ser202.

It belongs to the bacterial/plant glucose-1-phosphate adenylyltransferase family. As to quaternary structure, homotetramer.

The enzyme catalyses alpha-D-glucose 1-phosphate + ATP + H(+) = ADP-alpha-D-glucose + diphosphate. Its pathway is glycan biosynthesis; glycogen biosynthesis. Functionally, involved in the biosynthesis of ADP-glucose, a building block required for the elongation reactions to produce glycogen. Catalyzes the reaction between ATP and alpha-D-glucose 1-phosphate (G1P) to produce pyrophosphate and ADP-Glc. This chain is Glucose-1-phosphate adenylyltransferase, found in Jannaschia sp. (strain CCS1).